Reading from the N-terminus, the 302-residue chain is Transcription factor bHLH7 (302 aa).

The disordered stretch occupies residues 124–154 (QPMSQPAPPMPHQQSTIRPRVRARRGQATDP). A bHLH domain is found at 150–199 (QATDPHSIAERLRRERIAERIRSLQELVPTVNKTDRAAMIDEIVDYVKFL).

In terms of assembly, homodimer. As to expression, expressed constitutively in roots, leaves, stems and flowers.

The protein localises to the nucleus. The sequence is that of Transcription factor bHLH7 (BHLH7) from Arabidopsis thaliana (Mouse-ear cress).